The sequence spans 157 residues: Frd operon probable iron-sulfur subunit A (157 aa).

4Fe-4S ferredoxin-type domains lie at 24 to 55 (KGFS…IHNK), 56 to 85 (DYYY…VVSR), and 100 to 133 (FKAE…CIDR). [4Fe-4S] cluster is bound by residues C34, C37, C42, C46, C65, C68, C71, C75, C107, C110, C119, and C123.

The chain is Frd operon probable iron-sulfur subunit A from Proteus vulgaris.